Consider the following 59-residue polypeptide: Conotoxin ViVB (59 aa).

The signal sequence occupies residues Met-1–Val-22. The propeptide occupies Gln-23 to Arg-46. The residue at position 47 (Gln-47) is a Pyrrolidone carboxylic acid. Position 58 is a valine amide (Val-58).

Contains 2 disulfide bonds that can be either 'C1-C3, C2-C4' or 'C1-C4, C2-C3', since these disulfide connectivities have been observed for conotoxins with cysteine framework V (for examples, see AC P0DQQ7 and AC P81755). As to expression, expressed by the venom duct.

It is found in the secreted. The protein is Conotoxin ViVB of Conus virgo (Virgin cone).